A 220-amino-acid polypeptide reads, in one-letter code: Deoxyribose-phosphate aldolase (220 aa).

The Proton donor/acceptor role is filled by aspartate 89. Lysine 151 acts as the Schiff-base intermediate with acetaldehyde in catalysis. Lysine 180 (proton donor/acceptor) is an active-site residue.

Belongs to the DeoC/FbaB aldolase family. DeoC type 1 subfamily.

It localises to the cytoplasm. The enzyme catalyses 2-deoxy-D-ribose 5-phosphate = D-glyceraldehyde 3-phosphate + acetaldehyde. It participates in carbohydrate degradation; 2-deoxy-D-ribose 1-phosphate degradation; D-glyceraldehyde 3-phosphate and acetaldehyde from 2-deoxy-alpha-D-ribose 1-phosphate: step 2/2. Its function is as follows. Catalyzes a reversible aldol reaction between acetaldehyde and D-glyceraldehyde 3-phosphate to generate 2-deoxy-D-ribose 5-phosphate. The protein is Deoxyribose-phosphate aldolase of Bdellovibrio bacteriovorus (strain ATCC 15356 / DSM 50701 / NCIMB 9529 / HD100).